A 225-amino-acid chain; its full sequence is Respiratory nitrate reductase 1 gamma chain (225 aa).

Position 1 is an N-formylmethionine (Met1). Residues 1–3 lie on the Periplasmic side of the membrane; that stretch reads MQF. Residues 4–29 traverse the membrane as a helical segment; sequence LNMFFFDIYPYIAGAVFLIGSWLRYD. Topologically, residues 30–47 are cytoplasmic; it reads YGQYTWRAASSQMLDRKG. The helical transmembrane segment at 48 to 70 threads the bilayer; sequence MNLASNLFHIGILGIFVGHFFGM. Residues His56 and His66 each coordinate heme b. Residues 71–82 are Periplasmic-facing; the sequence is LTPHWMYEAWLP. Residues 83–112 form a helical membrane-spanning segment; sequence IEVKQKMAMFAGGASGVLCLIGGVLLLKRR. At 113–124 the chain is on the cytoplasmic side; the sequence is LFSPRVRATTTG. A helical membrane pass occupies residues 125–148; the sequence is ADILILSLLVIQCALGLLTIPFSA. Residues 149–182 are Periplasmic-facing; it reads QHMDGSEMMKLVGWAQSVVTFHGGASQHLDGVAF. Residues 183-198 form a helical membrane-spanning segment; the sequence is IFRLHLVLGMTLFLLF. The heme b site is built by His187 and His205. Residues 199–225 are Cytoplasmic-facing; it reads PFSRLIHIWSVPVEYLTRKYQLVRARH.

As to quaternary structure, dimer of heterotrimers each composed of an alpha, a beta and a gamma chain. Alpha and beta are catalytic chains; gamma chains are involved in binding the enzyme complex to the cytoplasmic membrane. The cofactor is heme.

The protein resides in the cell inner membrane. The enzyme catalyses nitrate + a quinol = a quinone + nitrite + H2O. In terms of biological role, the nitrate reductase enzyme complex allows E.coli to use nitrate as an electron acceptor during anaerobic growth. The gamma chain is a membrane-embedded heme-iron unit resembling cytochrome b, which transfers electrons from quinones to the beta subunit. In Escherichia coli (strain K12), this protein is Respiratory nitrate reductase 1 gamma chain (narI).